Consider the following 602-residue polypeptide: Elongation factor 4 (602 aa).

A tr-type G domain is found at 7–189; that stretch reads NNIRNFSIIA…RILTAVPPPQ (183 aa). GTP contacts are provided by residues 19 to 24 and 136 to 139; these read DHGKST and NKID.

The protein belongs to the TRAFAC class translation factor GTPase superfamily. Classic translation factor GTPase family. LepA subfamily.

The protein resides in the cell inner membrane. It carries out the reaction GTP + H2O = GDP + phosphate + H(+). Required for accurate and efficient protein synthesis under certain stress conditions. May act as a fidelity factor of the translation reaction, by catalyzing a one-codon backward translocation of tRNAs on improperly translocated ribosomes. Back-translocation proceeds from a post-translocation (POST) complex to a pre-translocation (PRE) complex, thus giving elongation factor G a second chance to translocate the tRNAs correctly. Binds to ribosomes in a GTP-dependent manner. The sequence is that of Elongation factor 4 from Protochlamydia amoebophila (strain UWE25).